Reading from the N-terminus, the 261-residue chain is 3-deoxy-manno-octulosonate cytidylyltransferase (261 aa).

It belongs to the KdsB family.

Its subcellular location is the cytoplasm. The catalysed reaction is 3-deoxy-alpha-D-manno-oct-2-ulosonate + CTP = CMP-3-deoxy-beta-D-manno-octulosonate + diphosphate. It functions in the pathway nucleotide-sugar biosynthesis; CMP-3-deoxy-D-manno-octulosonate biosynthesis; CMP-3-deoxy-D-manno-octulosonate from 3-deoxy-D-manno-octulosonate and CTP: step 1/1. Its pathway is bacterial outer membrane biogenesis; lipopolysaccharide biosynthesis. In terms of biological role, activates KDO (a required 8-carbon sugar) for incorporation into bacterial lipopolysaccharide in Gram-negative bacteria. This chain is 3-deoxy-manno-octulosonate cytidylyltransferase, found in Dechloromonas aromatica (strain RCB).